A 250-amino-acid chain; its full sequence is N-acyl homoserine lactonase (250 aa).

Histidine 104, histidine 106, aspartate 108, histidine 109, histidine 169, aspartate 191, and histidine 235 together coordinate Zn(2+).

It belongs to the metallo-beta-lactamase superfamily. As to quaternary structure, monomer. Zn(2+) is required as a cofactor.

It catalyses the reaction an N-acyl-L-homoserine lactone + H2O = an N-acyl-L-homoserine + H(+). This chain is N-acyl homoserine lactonase, found in Bacillus cereus.